We begin with the raw amino-acid sequence, 1572 residues long: E3 ubiquitin-protein ligase HECW2 (1572 aa).

Position 48 is a phosphoserine (S48). The C2 domain maps to 167–301 (GAEGMEGGAS…QAIGDQMLSY (135 aa)). 2 disordered regions span residues 341–452 (VNSV…SSFP) and 489–796 (IMFS…PSVR). Over residues 400–410 (TSTSSRTSPPR) the composition is skewed to low complexity. Over residues 518–532 (ASTHEAASFEDKPEN) the composition is skewed to basic and acidic residues. 4 stretches are compositionally biased toward polar residues: residues 572–588 (EVDQ…SDAS), 597–614 (ETES…SSET), 643–664 (SSCN…SSLE), and 688–703 (PTSS…SVCT). An interaction with TP73 region spans residues 737 to 1068 (WQRRGSLEGA…PRPSSTFNTV (332 aa)). The span at 744–776 (EGAAAAAESPPQEEGSAGEAQGTCEGATAQEEG) shows a compositional bias: low complexity. One can recognise a WW 1 domain in the interval 807–840 (EALPPNWEARIDSHGRIFYVDHVNRTTTWQRPTA). A coiled-coil region spans residues 847–874 (LQRSNSIQQMEQLNRRYQSIRRTMTNER). Phosphoserine occurs at positions 852 and 909. Positions 985 to 1018 (LELPRGWEMKHDHQGKAFFVDHNSRTTTFIDPRL) constitute a WW 2 domain. 2 disordered regions span residues 1024–1069 (RPTS…NTVS) and 1161–1187 (CQSP…RAPA). A compositionally biased stretch (basic residues) spans 1031–1040 (HRQHLTRQRS). Over residues 1161–1181 (CQSPRGSPVSSPQNSPGTQRA) the composition is skewed to polar residues. S1175 carries the phosphoserine modification. The region spanning 1237–1572 (SRKDLQRNKL…VEETSTFGLE (336 aa)) is the HECT domain. The active-site Glycyl thioester intermediate is C1540.

Interacts with TP73. Interacts with FZR1. Ubiquitinated and degraded during mitotic exit by APC/C-Cdh1. Predominantly expressed in adult brain, lung and heart.

It is found in the cytoplasm. The protein localises to the cytoskeleton. It localises to the spindle. It catalyses the reaction S-ubiquitinyl-[E2 ubiquitin-conjugating enzyme]-L-cysteine + [acceptor protein]-L-lysine = [E2 ubiquitin-conjugating enzyme]-L-cysteine + N(6)-ubiquitinyl-[acceptor protein]-L-lysine.. It functions in the pathway protein modification; protein ubiquitination. In terms of biological role, E3 ubiquitin-protein ligase that mediates ubiquitination of TP73. Acts to stabilize TP73 and enhance activation of transcription by TP73. Involved in the regulation of mitotic metaphase/anaphase transition. This is E3 ubiquitin-protein ligase HECW2 (HECW2) from Homo sapiens (Human).